The chain runs to 261 residues: Thioesterase frbD (261 aa).

The protein belongs to the AMT4 thioesterase family.

The protein operates within antifungal biosynthesis. In terms of biological role, thioesterase; part of the gene cluster that mediates the biosynthesis of the antifungal antibiotic FR901469, an inhibitor of beta-1,3-glucansynthase, exerting antifungal activity against the pathogenes Candida albicans and Aspergillus fumigatus. FR901469 is a cyclic depsipeptide containing 12 amino acid residues and a fatty acid chain. The NRPS frbI contains 12 modules responsible for the formation of the depsipeptide backbone which is denoted as Acyl-Thr-Ala-Tyr-Val-4OHPro-Thr-Thr-3OHPro-threo3OHGln-Gly-Thr-Orn-OH (C71H116N14O23). The PKS frbB is probably involved in the production of the hydrocarbon chain, and the acyl-CoA ligase frbC might be involved in the transport of the chain to the peptide ptoduct of frbI. Because FR901469 contains 3 hydroxylated amino acid residues, the 3 oxygenases frbA, frbH, and frbJ might be participating in amino acid hydroxylation. As no thioesterase domains were detected in frbI or frbB, the thioesterases frbD and frbE may instead release and cyclize the products of the NRPS and PKS, respectively. In Dothideomycetidae sp. (strain 11243) (Fungal sp. (strain No.11243)), this protein is Thioesterase frbD.